The following is a 322-amino-acid chain: Cytochrome c biogenesis protein CcsA (322 aa).

7 consecutive transmembrane segments (helical) span residues 9-29 (IFTHISFSIVSIVIIIHLITL), 44-64 (GMIVTFLCLTGLLITRWIYSG), 71-91 (LYESLIFLSWSFSLIHIVPYF), 143-163 (MILSYAALLCGSLLSVALLVI), 226-246 (VISLGFIFLTIGILSGAVWAN), 255-275 (WDPKETWAFITWIVFAIYLHI), and 287-307 (AIVATLGFLIIWICYFGVNLL).

It belongs to the CcmF/CycK/Ccl1/NrfE/CcsA family. In terms of assembly, may interact with Ccs1.

The protein resides in the plastid. The protein localises to the chloroplast thylakoid membrane. Functionally, required during biogenesis of c-type cytochromes (cytochrome c6 and cytochrome f) at the step of heme attachment. This Lactuca sativa (Garden lettuce) protein is Cytochrome c biogenesis protein CcsA.